The following is a 300-amino-acid chain: MQFHSSSALITPFKKDLSVDEAAYETLIKRQIFQGMDACVPVGTTGESATLTHKEHMRCIEIAIETCKSTKTPSNSRMKVLAGVGSNATSESLSLAKFAQKIGADAILCVSPYYNRPTQQGLFEHYKTIAQSVEIPVMLYDVPSRTGVSIEVPTALKLFREVPNIKAIKEASGSLKRVTELHYYEKDFKIFSGEDSLNHSIMFSGGCGVISVTGNLMPNLISQMVNCALKFEYQQALEIQNKLFDLHQALFVETNPIPIKMAMHLAGLIENPSYRLPLVAPSKETIKLLEKTLQQYEVIA.

Threonine 45 contributes to the pyruvate binding site. Tyrosine 140 (proton donor/acceptor) is an active-site residue. Catalysis depends on lysine 169, which acts as the Schiff-base intermediate with substrate. Isoleucine 210 lines the pyruvate pocket.

The protein belongs to the DapA family. Homotetramer; dimer of dimers.

It localises to the cytoplasm. The catalysed reaction is L-aspartate 4-semialdehyde + pyruvate = (2S,4S)-4-hydroxy-2,3,4,5-tetrahydrodipicolinate + H2O + H(+). The protein operates within amino-acid biosynthesis; L-lysine biosynthesis via DAP pathway; (S)-tetrahydrodipicolinate from L-aspartate: step 3/4. Catalyzes the condensation of (S)-aspartate-beta-semialdehyde [(S)-ASA] and pyruvate to 4-hydroxy-tetrahydrodipicolinate (HTPA). The polypeptide is 4-hydroxy-tetrahydrodipicolinate synthase (Helicobacter pylori (strain J99 / ATCC 700824) (Campylobacter pylori J99)).